The following is a 272-amino-acid chain: Ribosomal RNA small subunit methyltransferase A (272 aa).

Asn16, Leu18, Gly43, Glu64, Asp89, and Asn110 together coordinate S-adenosyl-L-methionine.

Belongs to the class I-like SAM-binding methyltransferase superfamily. rRNA adenine N(6)-methyltransferase family. RsmA subfamily.

Its subcellular location is the cytoplasm. It carries out the reaction adenosine(1518)/adenosine(1519) in 16S rRNA + 4 S-adenosyl-L-methionine = N(6)-dimethyladenosine(1518)/N(6)-dimethyladenosine(1519) in 16S rRNA + 4 S-adenosyl-L-homocysteine + 4 H(+). Specifically dimethylates two adjacent adenosines (A1518 and A1519) in the loop of a conserved hairpin near the 3'-end of 16S rRNA in the 30S particle. May play a critical role in biogenesis of 30S subunits. The polypeptide is Ribosomal RNA small subunit methyltransferase A (Pseudomonas fluorescens (strain Pf0-1)).